The primary structure comprises 310 residues: Methionyl-tRNA formyltransferase (310 aa).

Residue 111 to 114 (SILP) coordinates (6S)-5,6,7,8-tetrahydrofolate.

It belongs to the Fmt family.

It carries out the reaction L-methionyl-tRNA(fMet) + (6R)-10-formyltetrahydrofolate = N-formyl-L-methionyl-tRNA(fMet) + (6S)-5,6,7,8-tetrahydrofolate + H(+). In terms of biological role, attaches a formyl group to the free amino group of methionyl-tRNA(fMet). The formyl group appears to play a dual role in the initiator identity of N-formylmethionyl-tRNA by promoting its recognition by IF2 and preventing the misappropriation of this tRNA by the elongation apparatus. This chain is Methionyl-tRNA formyltransferase, found in Methylobacterium sp. (strain 4-46).